The primary structure comprises 186 residues: Large ribosomal subunit protein eL18 (186 aa).

The protein belongs to the eukaryotic ribosomal protein eL18 family. Component of the large ribosomal subunit. Mature ribosomes consist of a small (40S) and a large (60S) subunit. The 40S subunit contains about 32 different proteins and 1 molecule of RNA (18S). The 60S subunit contains 45 different proteins and 3 molecules of RNA (25S, 5.8S and 5S).

The protein resides in the cytoplasm. Functionally, component of the ribosome, a large ribonucleoprotein complex responsible for the synthesis of proteins in the cell. The small ribosomal subunit (SSU) binds messenger RNAs (mRNAs) and translates the encoded message by selecting cognate aminoacyl-transfer RNA (tRNA) molecules. The large subunit (LSU) contains the ribosomal catalytic site termed the peptidyl transferase center (PTC), which catalyzes the formation of peptide bonds, thereby polymerizing the amino acids delivered by tRNAs into a polypeptide chain. The nascent polypeptides leave the ribosome through a tunnel in the LSU and interact with protein factors that function in enzymatic processing, targeting, and the membrane insertion of nascent chains at the exit of the ribosomal tunnel. The protein is Large ribosomal subunit protein eL18 of Candida albicans (strain SC5314 / ATCC MYA-2876) (Yeast).